The sequence spans 168 residues: Transcriptional repressor NrdR (168 aa).

A zinc finger spans residues Cys3–Cys34. The 91-residue stretch at Tyr49–Glu139 folds into the ATP-cone domain.

It belongs to the NrdR family. Requires Zn(2+) as cofactor.

In terms of biological role, negatively regulates transcription of bacterial ribonucleotide reductase nrd genes and operons by binding to NrdR-boxes. The polypeptide is Transcriptional repressor NrdR (Acidobacterium capsulatum (strain ATCC 51196 / DSM 11244 / BCRC 80197 / JCM 7670 / NBRC 15755 / NCIMB 13165 / 161)).